Here is a 682-residue protein sequence, read N- to C-terminus: Amphiphysin (682 aa).

2 coiled-coil regions span residues 10-84 and 144-191; these read AKNV…LHEV and DYDS…QEEL. The 217-residue stretch at 24-240 folds into the BAR domain; sequence VLQKLGKADE…MTKLGDQHAD (217 aa). Disordered regions lie at residues 244 to 310, 446 to 470, 501 to 530, and 561 to 606; these read TIQG…PKLT, ILAE…ETTG, GAVR…QEKV, and AAAE…ASDM. Residues 261–274 are compositionally biased toward pro residues; it reads PSPPEEVSPLPSPT. The segment covering 503–527 has biased composition (basic and acidic residues); the sequence is VRTEQEAAAEGDKPQGEEKDVDVSQ. The segment covering 567 to 596 has biased composition (polar residues); it reads TQGTDSETSQIGSEQKATEEIQTTPSQDQP. Residues 609–682 enclose the SH3 domain; it reads GFLFKVEVLH…FPENFTRHLE (74 aa).

In terms of assembly, heterodimer with BIN1. Binds SH3GLB1. In terms of tissue distribution, is abundant in the forebrain and cerebellum. It is also found in the adrenal gland, anterior and posterior pituitary.

The protein localises to the cytoplasmic vesicle. Its subcellular location is the secretory vesicle. It is found in the synaptic vesicle membrane. It localises to the cytoplasm. The protein resides in the cytoskeleton. Functionally, may participate in mechanisms of regulated exocytosis in synapses and certain endocrine cell types. May control the properties of the membrane associated cytoskeleton. The polypeptide is Amphiphysin (AMPH) (Gallus gallus (Chicken)).